The sequence spans 241 residues: MSMLCYTLITAFLIGIWAAPKSEDNVPLGSPATSDLSDTSCAQTHEGLKTSRNTDQRHPAPQKAEDQELRTAANIIVDPKLFQKRQFQSPRVLFSTQPPLLSRDEESVEFLDNEDSLNRNIRAKREDHPVHNLGEHSVCDSVSAWVTKTTATDIKGNTVTVMENVNLDNKVYKQYFFETKCKNPNPVPSGCRGIDSSHWNSYCTETDTFIKALTMEGNQASWRFIRIDTACVCVITKKTGN.

The N-terminal stretch at Met1–Ala18 is a signal peptide. A propeptide spanning residues Ala19–Arg125 is cleaved from the precursor. Positions Gly47–Gln67 are disordered. Intrachain disulfides connect Cys139–Cys203, Cys181–Cys231, and Cys191–Cys233.

This sequence belongs to the NGF-beta family. Homodimer; non-covalently linked. In terms of tissue distribution, expressed by the venom gland.

It is found in the secreted. In terms of biological role, nerve growth factor is important for the development and maintenance of the sympathetic and sensory nervous systems. It stimulates division and differentiation of sympathetic and embryonic sensory neurons as well as basal forebrain cholinergic neurons in the brain. Its relevance in the snake venom is not clear. However, it has been shown to inhibit metalloproteinase-dependent proteolysis of platelet glycoprotein Ib alpha, suggesting a metalloproteinase inhibition to prevent metalloprotease autodigestion and/or protection against prey proteases. Binds a lipid between the two protein chains in the homodimer. The lipid-bound form promotes histamine relase from mouse mast cells, contrary to the lipid-free form. The chain is Venom nerve growth factor 2 from Naja sputatrix (Malayan spitting cobra).